A 164-amino-acid chain; its full sequence is Small ribosomal subunit protein uS9 (164 aa).

This sequence belongs to the universal ribosomal protein uS9 family.

This Rickettsia bellii (strain OSU 85-389) protein is Small ribosomal subunit protein uS9.